Here is a 301-residue protein sequence, read N- to C-terminus: Probable alpha-L-glutamate ligase (301 aa).

The ATP-grasp domain maps to 104–287; it reads LQLLSRKGIG…VAGLIYEFIE (184 aa). ATP contacts are provided by residues Lys-141, 178–179, Asp-187, and 211–213; these read EF and RSN. Mg(2+) is bound by residues Asp-248, Glu-260, and Asn-262. Asp-248, Glu-260, and Asn-262 together coordinate Mn(2+).

This sequence belongs to the RimK family. The cofactor is Mg(2+). Mn(2+) serves as cofactor.

In Shewanella loihica (strain ATCC BAA-1088 / PV-4), this protein is Probable alpha-L-glutamate ligase.